The following is a 420-amino-acid chain: Torsin-4A-A (420 aa).

The chain crosses the membrane as a helical span at residues 130–150 (CLLLFIGIVCFQILNAIENLD). Position 202 to 209 (202 to 209 (GPSGVGKS)) interacts with ATP.

The protein belongs to the ClpA/ClpB family. Torsin subfamily.

It is found in the membrane. The sequence is that of Torsin-4A-A (tor4a-a) from Xenopus laevis (African clawed frog).